A 327-amino-acid polypeptide reads, in one-letter code: Thiamine-binding periplasmic protein (327 aa).

Residues 1-18 (MLKKCLPLLLLCTAPVFA) form the signal peptide. Thiamine-binding positions include 59 to 60 (DG), 161 to 162 (ST), W197, and 215 to 218 (YTTS).

Belongs to the bacterial solute-binding protein 1 family. In terms of assembly, monomer in solution. The complex is composed of two ATP-binding proteins (ThiQ), two transmembrane proteins (ThiP) and a solute-binding protein (ThiB).

Its subcellular location is the periplasm. Its activity is regulated as follows. Transport is inhibited by the sulfhydryl-specific modifier N-ethylmaleimide. Functionally, part of the ABC transporter complex ThiBPQ involved in thiamine import. Binds thiamine, thiamine phosphate and thiamine diphosphate with high affinity. The sequence is that of Thiamine-binding periplasmic protein (thiB) from Escherichia coli (strain K12).